Consider the following 93-residue polypeptide: UPF0390 protein C24B10.18 (93 aa).

Residues 1–32 (MAQGEFKKKKNSSANKGGRVTKHSKNPKKGAR) form a disordered region. The span at 19 to 31 (RVTKHSKNPKKGA) shows a compositional bias: basic residues.

Belongs to the UPF0390 family.

This chain is UPF0390 protein C24B10.18, found in Schizosaccharomyces pombe (strain 972 / ATCC 24843) (Fission yeast).